The following is a 54-amino-acid chain: UPF0391 membrane protein pRL90066 (54 aa).

Helical transmembrane passes span 5–25 (ALVFLVVALIAGVLGFGGIAG) and 28–48 (ASIAQVLFFIFLVLFVVSLVM).

Belongs to the UPF0391 family.

The protein localises to the cell membrane. The chain is UPF0391 membrane protein pRL90066 from Rhizobium johnstonii (strain DSM 114642 / LMG 32736 / 3841) (Rhizobium leguminosarum bv. viciae).